Here is a 105-residue protein sequence, read N- to C-terminus: Large ribosomal subunit protein bL21 (105 aa).

It belongs to the bacterial ribosomal protein bL21 family. As to quaternary structure, part of the 50S ribosomal subunit. Contacts protein L20.

Functionally, this protein binds to 23S rRNA in the presence of protein L20. The protein is Large ribosomal subunit protein bL21 of Aliarcobacter butzleri (strain RM4018) (Arcobacter butzleri).